We begin with the raw amino-acid sequence, 446 residues long: Mannan endo-1,6-alpha-mannosidase DCW1 (446 aa).

An N-terminal signal peptide occupies residues 1–18; sequence MRLVTLLSGLVSLVSVFG. Residues asparagine 31, asparagine 81, asparagine 106, asparagine 200, asparagine 222, asparagine 237, asparagine 262, asparagine 278, asparagine 285, asparagine 334, asparagine 391, and asparagine 397 are each glycosylated (N-linked (GlcNAc...) asparagine). The interval 389 to 408 is disordered; that stretch reads PYNATNGGNSTGDGAAGTKP. Serine 422 is lipidated: GPI-anchor amidated serine. A propeptide spans 423-446 (removed in mature form); the sequence is RAGAGIITAIIGISIIACALWLVY.

This sequence belongs to the glycosyl hydrolase 76 family.

It localises to the secreted. Its subcellular location is the cell wall. The protein localises to the cell membrane. The catalysed reaction is Random hydrolysis of (1-&gt;6)-alpha-D-mannosidic linkages in unbranched (1-&gt;6)-mannans.. Its function is as follows. Required for normal synthesis of the cell wall. This is Mannan endo-1,6-alpha-mannosidase DCW1 (DCW1) from Candida glabrata (strain ATCC 2001 / BCRC 20586 / JCM 3761 / NBRC 0622 / NRRL Y-65 / CBS 138) (Yeast).